We begin with the raw amino-acid sequence, 312 residues long: Porphobilinogen deaminase (312 aa).

Cys241 carries the post-translational modification S-(dipyrrolylmethanemethyl)cysteine.

It belongs to the HMBS family. In terms of assembly, monomer. It depends on dipyrromethane as a cofactor.

The catalysed reaction is 4 porphobilinogen + H2O = hydroxymethylbilane + 4 NH4(+). It participates in porphyrin-containing compound metabolism; protoporphyrin-IX biosynthesis; coproporphyrinogen-III from 5-aminolevulinate: step 2/4. Its function is as follows. Tetrapolymerization of the monopyrrole PBG into the hydroxymethylbilane pre-uroporphyrinogen in several discrete steps. The chain is Porphobilinogen deaminase from Aliarcobacter butzleri (strain RM4018) (Arcobacter butzleri).